A 620-amino-acid chain; its full sequence is Dihydroxy-acid dehydratase (620 aa).

A Mg(2+)-binding site is contributed by D81. Position 122 (C122) interacts with [2Fe-2S] cluster. Residues D123 and K124 each coordinate Mg(2+). Position 124 is an N6-carboxylysine (K124). C195 lines the [2Fe-2S] cluster pocket. E491 provides a ligand contact to Mg(2+). S517 functions as the Proton acceptor in the catalytic mechanism.

The protein belongs to the IlvD/Edd family. In terms of assembly, homodimer. The cofactor is [2Fe-2S] cluster. Mg(2+) serves as cofactor.

The enzyme catalyses (2R)-2,3-dihydroxy-3-methylbutanoate = 3-methyl-2-oxobutanoate + H2O. The catalysed reaction is (2R,3R)-2,3-dihydroxy-3-methylpentanoate = (S)-3-methyl-2-oxopentanoate + H2O. It participates in amino-acid biosynthesis; L-isoleucine biosynthesis; L-isoleucine from 2-oxobutanoate: step 3/4. Its pathway is amino-acid biosynthesis; L-valine biosynthesis; L-valine from pyruvate: step 3/4. Functions in the biosynthesis of branched-chain amino acids. Catalyzes the dehydration of (2R,3R)-2,3-dihydroxy-3-methylpentanoate (2,3-dihydroxy-3-methylvalerate) into 2-oxo-3-methylpentanoate (2-oxo-3-methylvalerate) and of (2R)-2,3-dihydroxy-3-methylbutanoate (2,3-dihydroxyisovalerate) into 2-oxo-3-methylbutanoate (2-oxoisovalerate), the penultimate precursor to L-isoleucine and L-valine, respectively. The protein is Dihydroxy-acid dehydratase of Colwellia psychrerythraea (strain 34H / ATCC BAA-681) (Vibrio psychroerythus).